The primary structure comprises 425 residues: MNIISVGVNHKTAPIEIRERISLSEVQNKEFITDLISSGLAHEAMVISTCNRTELYVVPAMHEVTGEYLKEYLIAYKDARKEVRPEHFFSRFYCGTARHLFEVSSAIDSLILGEGQILGQVKDAYRISAEVQAAGILLTRLCHTAFSVAKKVKTKTKIMEGAVSVSYAAVELAQKIFSNLSMKKILLIGAGETGELAAKHMFQKNARNIVITNRTLSKAEALAEELGTKKVLPFESYKDYLHEFDIIITAVSTKEYVLSEAEMHQTMMKRRLKPVIILDLGLPRNVDPDIAKLQNMFLKDIDALKHIIDKNLERRSAELPKVNAIIEEELIAFGQWINTLKVRPTIVDLQSKFIEIKEKELERYRYKVSEDELARMEHLTDRILKKILHHPIKMLKAPIDTANNIPSRVNLVRNVFDLEEPNQQH.

Residues 49–52 (TCNR), Ser109, 114–116 (EGQ), and Gln120 each bind substrate. Cys50 functions as the Nucleophile in the catalytic mechanism. 189–194 (GAGETG) serves as a coordination point for NADP(+).

This sequence belongs to the glutamyl-tRNA reductase family. As to quaternary structure, homodimer.

It carries out the reaction (S)-4-amino-5-oxopentanoate + tRNA(Glu) + NADP(+) = L-glutamyl-tRNA(Glu) + NADPH + H(+). The protein operates within porphyrin-containing compound metabolism; protoporphyrin-IX biosynthesis; 5-aminolevulinate from L-glutamyl-tRNA(Glu): step 1/2. Its pathway is porphyrin-containing compound metabolism; chlorophyll biosynthesis. Functionally, catalyzes the NADPH-dependent reduction of glutamyl-tRNA(Glu) to glutamate 1-semialdehyde (GSA). This chain is Glutamyl-tRNA reductase, found in Chlorobium phaeobacteroides (strain DSM 266 / SMG 266 / 2430).